Reading from the N-terminus, the 640-residue chain is Threonine--tRNA ligase (640 aa).

Residues 224 to 525 (DHRKLGKELD…LTEHYAGAFP (302 aa)) form a catalytic region. Residues Cys-323, His-374, and His-502 each contribute to the Zn(2+) site.

It belongs to the class-II aminoacyl-tRNA synthetase family. Homodimer. The cofactor is Zn(2+).

Its subcellular location is the cytoplasm. The enzyme catalyses tRNA(Thr) + L-threonine + ATP = L-threonyl-tRNA(Thr) + AMP + diphosphate + H(+). Functionally, catalyzes the attachment of threonine to tRNA(Thr) in a two-step reaction: L-threonine is first activated by ATP to form Thr-AMP and then transferred to the acceptor end of tRNA(Thr). Also edits incorrectly charged L-seryl-tRNA(Thr). In Tropheryma whipplei (strain Twist) (Whipple's bacillus), this protein is Threonine--tRNA ligase.